Consider the following 731-residue polypeptide: DNA ligase (731 aa).

NAD(+)-binding positions include 59 to 63 (DSEYD), 108 to 109 (SL), and Glu-142. The active-site N6-AMP-lysine intermediate is the Lys-144. NAD(+)-binding residues include Arg-165, Glu-202, Lys-318, and Lys-342. Residues Cys-434, Cys-437, Cys-452, and Cys-458 each coordinate Zn(2+). The region spanning 645–731 (LASSPLSGKI…ENDGQDSIKI (87 aa)) is the BRCT domain.

This sequence belongs to the NAD-dependent DNA ligase family. LigA subfamily. The cofactor is Mg(2+). Mn(2+) serves as cofactor.

It carries out the reaction NAD(+) + (deoxyribonucleotide)n-3'-hydroxyl + 5'-phospho-(deoxyribonucleotide)m = (deoxyribonucleotide)n+m + AMP + beta-nicotinamide D-nucleotide.. In terms of biological role, DNA ligase that catalyzes the formation of phosphodiester linkages between 5'-phosphoryl and 3'-hydroxyl groups in double-stranded DNA using NAD as a coenzyme and as the energy source for the reaction. It is essential for DNA replication and repair of damaged DNA. In Zymomonas mobilis subsp. mobilis (strain ATCC 31821 / ZM4 / CP4), this protein is DNA ligase.